The chain runs to 170 residues: Small ribosomal subunit protein bS18c (170 aa).

Disordered stretches follow at residues 1–59 and 151–170; these read MYIS…IGPG and NLRNSNQNLRNNNRNLSSDC. Repeats lie at residues 4–10, 11–17, 18–24, 25–31, 32–38, 39–45, and 46–52; these read SKQPFRK, SKQTFHK, FKQPFRK, and SKQPFRR. The interval 4-52 is 7 X 7 AA tandem repeats; that stretch reads SKQPFRKSKQPFRKSKQTFHKSKQPFRKFKQPFRKSKQPFRKSKQPFRR. A compositionally biased stretch (basic residues) spans 7–55; that stretch reads PFRKSKQPFRKSKQTFHKSKQPFRKFKQPFRKSKQPFRKSKQPFRRRSR.

The protein belongs to the bacterial ribosomal protein bS18 family. Part of the 30S ribosomal subunit.

Its subcellular location is the plastid. It is found in the chloroplast. The sequence is that of Small ribosomal subunit protein bS18c (rps18) from Zea mays (Maize).